The chain runs to 108 residues: Zinc finger protein 475 (108 aa).

2 C2HC/C3H-type zinc fingers span residues 6–35 (PAVV…KWHN) and 79–108 (QLVP…KAAK). Positions 10, 13, 25, 29, 83, 86, 98, and 102 each coordinate Zn(2+).

It depends on Zn(2+) as a cofactor.

The protein is Zinc finger protein 475 of Homo sapiens (Human).